Here is a 505-residue protein sequence, read N- to C-terminus: Glutamate--tRNA ligase (505 aa).

The short motif at 12-22 is the 'HIGH' region element; the sequence is PSPTGALHIGG. Residues 260 to 264 carry the 'KMSKS' region motif; the sequence is KLSKR. K263 contacts ATP.

The protein belongs to the class-I aminoacyl-tRNA synthetase family. Glutamate--tRNA ligase type 1 subfamily. In terms of assembly, monomer.

It is found in the cytoplasm. The enzyme catalyses tRNA(Glu) + L-glutamate + ATP = L-glutamyl-tRNA(Glu) + AMP + diphosphate. Its function is as follows. Catalyzes the attachment of glutamate to tRNA(Glu) in a two-step reaction: glutamate is first activated by ATP to form Glu-AMP and then transferred to the acceptor end of tRNA(Glu). This is Glutamate--tRNA ligase from Parabacteroides distasonis (strain ATCC 8503 / DSM 20701 / CIP 104284 / JCM 5825 / NCTC 11152).